A 154-amino-acid chain; its full sequence is MDPDDDLVLENEAEEIERLQLPEELKKPIDPEEEDERVARIEFNCSGCEMHEMVHYFGRKPPFALGVIYPEDNYVMRDPFQPPPPRWQSKPEYYIAMGTKCSICSKTVCKDPGCSFYYTASFCLPCGKEELKNWPPEAQARIRKQMSVSQGRQT.

The protein belongs to the CDPF1 family.

The sequence is that of Cysteine-rich DPF motif domain-containing protein 1 from Drosophila melanogaster (Fruit fly).